Here is a 326-residue protein sequence, read N- to C-terminus: Transposase InsH for insertion sequence element IS5A (326 aa).

Belongs to the transposase 11 family.

Functionally, involved in the transposition of the insertion sequence IS5. The chain is Transposase InsH for insertion sequence element IS5A (insH1) from Escherichia coli (strain K12).